We begin with the raw amino-acid sequence, 515 residues long: Iridoid oxidase (515 aa).

Helical transmembrane passes span 8-28 (SLNP…IIFV) and 180-200 (AVQL…NLML). Cys-455 contributes to the heme binding site.

Belongs to the cytochrome P450 family. As to expression, expressed in the leaf internal phloem-associated parenchyma (IPAP) inside the mesophyll.

It is found in the endoplasmic reticulum membrane. The catalysed reaction is (+)-cis-trans-nepetalactol + 3 reduced [NADPH--hemoprotein reductase] + 3 O2 = 7-deoxyloganetate + 3 oxidized [NADPH--hemoprotein reductase] + 4 H2O + 4 H(+). The protein operates within alkaloid biosynthesis. Component of the seco-iridoid and derivatives monoterpenoid indole alkaloids (MIAs, e.g. vincristine, quinine, and strychnine) biosynthesis pathway. Catalyzes the conversion of cis-trans-nepetalactol (iridodial) into 7-deoxyloganetic acid. Also converts iridotrial into 7-deoxyloganetic acid. This Catharanthus roseus (Madagascar periwinkle) protein is Iridoid oxidase.